Consider the following 249-residue polypeptide: Coproheme decarboxylase (249 aa).

Fe-coproporphyrin III contacts are provided by residues R131, 145–149, H172, Q185, and S223; that span reads YPMNK. Y145 is a catalytic residue.

It belongs to the ChdC family. Type 1 subfamily. The cofactor is Fe-coproporphyrin III.

It catalyses the reaction Fe-coproporphyrin III + 2 H2O2 + 2 H(+) = heme b + 2 CO2 + 4 H2O. The enzyme catalyses Fe-coproporphyrin III + H2O2 + H(+) = harderoheme III + CO2 + 2 H2O. The catalysed reaction is harderoheme III + H2O2 + H(+) = heme b + CO2 + 2 H2O. Its pathway is porphyrin-containing compound metabolism; protoheme biosynthesis. Functionally, involved in coproporphyrin-dependent heme b biosynthesis. Catalyzes the decarboxylation of Fe-coproporphyrin III (coproheme) to heme b (protoheme IX), the last step of the pathway. The reaction occurs in a stepwise manner with a three-propionate intermediate. This is Coproheme decarboxylase from Thermus thermophilus (strain ATCC BAA-163 / DSM 7039 / HB27).